Here is a 112-residue protein sequence, read N- to C-terminus: Mu-ctenitoxin-Pn1a (112 aa).

An N-terminal signal peptide occupies residues 1 to 19 (MKLLGIFLVASFAFVLSFG). The propeptide occupies 20–33 (EEMIEGENPLEDQR). 7 cysteine pairs are disulfide-bonded: C39-C56, C46-C62, C53-C85, C55-C73, C64-C71, C91-C106, and C102-C110. Residue G111 is modified to Glycine amide.

The protein belongs to the neurotoxin 04 (omega-agtx) family. 02 (Tx1) subfamily. Contains 7 disulfide bonds. As to expression, expressed by the venom gland.

The protein resides in the secreted. Functionally, reversible inhibitor of neuronal sodium channels (Nav1.2/ SCN2A) that binds in proximity to site 1 and displays increasing affinity as the membrane potential is depolarized. Induces excitatory symptoms and spastic paralysis in mice. This is Mu-ctenitoxin-Pn1a from Phoneutria nigriventer (Brazilian armed spider).